The sequence spans 271 residues: Putative hydro-lyase blr2921 (271 aa).

The protein belongs to the D-glutamate cyclase family.

In Bradyrhizobium diazoefficiens (strain JCM 10833 / BCRC 13528 / IAM 13628 / NBRC 14792 / USDA 110), this protein is Putative hydro-lyase blr2921.